The following is a 221-amino-acid chain: Epididymal secretory glutathione peroxidase (221 aa).

The first 21 residues, 1 to 21 (MVTELRVFYLVPLLLASYVQT), serve as a signal peptide directing secretion. Residue Cys73 is part of the active site.

Belongs to the glutathione peroxidase family. As to expression, epididymis.

Its subcellular location is the secreted. It carries out the reaction 2 glutathione + H2O2 = glutathione disulfide + 2 H2O. Protects cells and enzymes from oxidative damage, by catalyzing the reduction of hydrogen peroxide, lipid peroxides and organic hydroperoxide, by glutathione. May constitute a glutathione peroxidase-like protective system against peroxide damage in sperm membrane lipids. This is Epididymal secretory glutathione peroxidase (Gpx5) from Mus musculus (Mouse).